Consider the following 563-residue polypeptide: Arginine--tRNA ligase (563 aa).

Residues 121–131 (PNIAKPFSIGH) carry the 'HIGH' region motif.

It belongs to the class-I aminoacyl-tRNA synthetase family. In terms of assembly, monomer.

It localises to the cytoplasm. The catalysed reaction is tRNA(Arg) + L-arginine + ATP = L-arginyl-tRNA(Arg) + AMP + diphosphate. The chain is Arginine--tRNA ligase (argS) from Streptococcus pneumoniae serotype 4 (strain ATCC BAA-334 / TIGR4).